A 367-amino-acid chain; its full sequence is Phospho-N-acetylmuramoyl-pentapeptide-transferase (367 aa).

Helical transmembrane passes span 30-50 (AAAI…IALL), 71-91 (LPTM…LLWA), 94-114 (TDPH…IGFI), 138-158 (ISLG…SVLM), 169-189 (LTID…TALS), 200-220 (GLAA…AYLA), 237-257 (GGEI…FLWF), 264-284 (IIMG…TALL), 289-309 (LLLP…SLQV), and 344-364 (KIVI…LMTL).

The protein belongs to the glycosyltransferase 4 family. MraY subfamily. Mg(2+) serves as cofactor.

Its subcellular location is the cell inner membrane. It catalyses the reaction UDP-N-acetyl-alpha-D-muramoyl-L-alanyl-gamma-D-glutamyl-meso-2,6-diaminopimeloyl-D-alanyl-D-alanine + di-trans,octa-cis-undecaprenyl phosphate = di-trans,octa-cis-undecaprenyl diphospho-N-acetyl-alpha-D-muramoyl-L-alanyl-D-glutamyl-meso-2,6-diaminopimeloyl-D-alanyl-D-alanine + UMP. It functions in the pathway cell wall biogenesis; peptidoglycan biosynthesis. Its function is as follows. Catalyzes the initial step of the lipid cycle reactions in the biosynthesis of the cell wall peptidoglycan: transfers peptidoglycan precursor phospho-MurNAc-pentapeptide from UDP-MurNAc-pentapeptide onto the lipid carrier undecaprenyl phosphate, yielding undecaprenyl-pyrophosphoryl-MurNAc-pentapeptide, known as lipid I. This Chlorobium phaeovibrioides (strain DSM 265 / 1930) (Prosthecochloris vibrioformis (strain DSM 265)) protein is Phospho-N-acetylmuramoyl-pentapeptide-transferase.